A 376-amino-acid chain; its full sequence is Light-dependent chlorophyll f synthase (376 aa).

The segment at 1–22 (MKLESDHVIATSDSSDYTSEPT) is disordered. Positions 11-22 (TSDSSDYTSEPT) are enriched in polar residues. Helical transmembrane passes span 51-68 (YVGW…TAAT), 140-155 (HFLI…EWEL), 164-178 (WISL…ASVS), 219-240 (LHQL…HGSL), and 298-312 (FLAA…SAAL). His140 is an a chlorophyll binding site. An a chlorophyll-binding site is contributed by His220.

Belongs to the reaction center PufL/M/PsbA/D family. As to quaternary structure, homodimer.

Its subcellular location is the cellular thylakoid membrane. Synthesizes chlorophyll f or chlorophyllide f (Chl f, 2-formyl chlorophyll a), probably by oxidation of chlorophyll a or chlorophyllide a and reduction of plastoquinone. The reaction is probably light-dependent. Chl f absorbs far red light (FRL, 707 nm in 100% methanol), and is synthesized when cells are grown in FRL, where it provides the advantage of extending the spectral range of harvested light in terrestrial cyanobacteria. When ectopically expressed in Synechococcus PCC 7002 (which does not grow in FRL and does not make Chl f) produces Chl f (0.059% of total chlorophyll). This is Light-dependent chlorophyll f synthase from Chlorogloeopsis fritschii (strain PCC 9212).